Reading from the N-terminus, the 190-residue chain is Peptidyl-tRNA hydrolase (190 aa).

Tyr14 contributes to the tRNA binding site. His19 acts as the Proton acceptor in catalysis. The tRNA site is built by Tyr63, Asn65, and Asn112.

The protein belongs to the PTH family. Monomer.

The protein resides in the cytoplasm. It carries out the reaction an N-acyl-L-alpha-aminoacyl-tRNA + H2O = an N-acyl-L-amino acid + a tRNA + H(+). Hydrolyzes ribosome-free peptidyl-tRNAs (with 1 or more amino acids incorporated), which drop off the ribosome during protein synthesis, or as a result of ribosome stalling. Functionally, catalyzes the release of premature peptidyl moieties from peptidyl-tRNA molecules trapped in stalled 50S ribosomal subunits, and thus maintains levels of free tRNAs and 50S ribosomes. This is Peptidyl-tRNA hydrolase from Kosmotoga olearia (strain ATCC BAA-1733 / DSM 21960 / TBF 19.5.1).